A 222-amino-acid polypeptide reads, in one-letter code: Cytidylate kinase (222 aa).

12–20 (GPSGAGKGT) provides a ligand contact to ATP.

Belongs to the cytidylate kinase family. Type 1 subfamily.

The protein resides in the cytoplasm. The catalysed reaction is CMP + ATP = CDP + ADP. The enzyme catalyses dCMP + ATP = dCDP + ADP. This Methylococcus capsulatus (strain ATCC 33009 / NCIMB 11132 / Bath) protein is Cytidylate kinase.